The chain runs to 469 residues: 3-isopropylmalate dehydratase large subunit (469 aa).

3 residues coordinate [4Fe-4S] cluster: C349, C410, and C413.

This sequence belongs to the aconitase/IPM isomerase family. LeuC type 1 subfamily. In terms of assembly, heterodimer of LeuC and LeuD. [4Fe-4S] cluster is required as a cofactor.

The enzyme catalyses (2R,3S)-3-isopropylmalate = (2S)-2-isopropylmalate. It functions in the pathway amino-acid biosynthesis; L-leucine biosynthesis; L-leucine from 3-methyl-2-oxobutanoate: step 2/4. Its function is as follows. Catalyzes the isomerization between 2-isopropylmalate and 3-isopropylmalate, via the formation of 2-isopropylmaleate. This Azoarcus sp. (strain BH72) protein is 3-isopropylmalate dehydratase large subunit.